A 370-amino-acid chain; its full sequence is Histidinol-phosphate aminotransferase (370 aa).

Lys-223 bears the N6-(pyridoxal phosphate)lysine mark.

The protein belongs to the class-II pyridoxal-phosphate-dependent aminotransferase family. Histidinol-phosphate aminotransferase subfamily. In terms of assembly, homodimer. It depends on pyridoxal 5'-phosphate as a cofactor.

The catalysed reaction is L-histidinol phosphate + 2-oxoglutarate = 3-(imidazol-4-yl)-2-oxopropyl phosphate + L-glutamate. Its pathway is amino-acid biosynthesis; L-histidine biosynthesis; L-histidine from 5-phospho-alpha-D-ribose 1-diphosphate: step 7/9. The sequence is that of Histidinol-phosphate aminotransferase from Methylobacterium sp. (strain 4-46).